The primary structure comprises 753 residues: Pumilio homolog 23 (753 aa).

A disordered region spans residues 1–84 (MVSVGSKSLP…SEFEHQNQFV (84 aa)). 3 stretches are compositionally biased toward basic and acidic residues: residues 23 to 38 (MGER…ERNK), 47 to 57 (GNRGFDVDSSK), and 73 to 84 (KHSEFEHQNQFV). Pumilio repeat units follow at residues 123-158 (ETRG…SFIR), 159-198 (NSAS…SVIE), 206-244 (KVIV…ELYG), 284-325 (GLLS…EIIP), 345-380 (NVAK…EMFN), 381-418 (KVFK…IMWE), 526-563 (SMKA…RLII), and 564-599 (KLRG…AIAS). The PUM-HD domain maps to 322–675 (EIIPLILRCN…DASEDAAQEI (354 aa)). Composition is skewed to basic and acidic residues over residues 677-688 (VKNTRKEIDHHP), 699-712 (HAKD…GEKR), and 719-728 (KTSEATDKPK). Residues 677–753 (VKNTRKEIDH…KNRHSNKMRI (77 aa)) form a disordered region. Positions 744–753 (KNRHSNKMRI) are enriched in basic residues.

The protein localises to the nucleus. Its subcellular location is the nucleolus. Its function is as follows. Sequence-specific RNA-binding protein that regulates translation and mRNA stability by binding the 3'-UTR of target mRNAs. The sequence is that of Pumilio homolog 23 (APUM23) from Arabidopsis thaliana (Mouse-ear cress).